Here is a 268-residue protein sequence, read N- to C-terminus: MICOS complex subunit MIC27 (268 aa).

The N-terminal 27 residues, M1–K27, are a transit peptide targeting the mitochondrion. The Mitochondrial intermembrane portion of the chain corresponds to Q28–D110. Residues F111–A129 form a helical membrane-spanning segment. Residues R130–K137 are Mitochondrial matrix-facing. A helical membrane pass occupies residues I138–V155. At Q156–S268 the chain is on the mitochondrial intermembrane side. The segment covering S187–K200 has biased composition (basic and acidic residues). Residues S187 to S268 are disordered. Position 204 is a phosphoserine (S204). Residues K249–D260 are compositionally biased toward basic and acidic residues.

The protein belongs to the apolipoprotein O/MICOS complex subunit Mic27 family. As to quaternary structure, component of the mitochondrial contact site and cristae organizing system (MICOS) complex, composed of at least MICOS10/MIC10, CHCHD3/MIC19, CHCHD6/MIC25, APOOL/MIC27, IMMT/MIC60, APOO/MIC23/MIC26 and MICOS13/MIC13. This complex was also known under the names MINOS or MitOS complex. The MICOS complex associates with mitochondrial outer membrane proteins SAMM50, MTX1 and MTX2 (together described as components of the mitochondrial outer membrane sorting assembly machinery (SAM) complex) and DNAJC11, mitochondrial inner membrane protein TMEM11 and with HSPA9. The MICOS and SAM complexes together with DNAJC11 are part of a large protein complex spanning both membranes termed the mitochondrial intermembrane space bridging (MIB) complex. Interacts with MICOS10/MIC10, IMMT/MIC60 and APOO/MIC23/MIC26.

The protein resides in the mitochondrion inner membrane. It is found in the mitochondrion. In terms of biological role, component of the MICOS complex, a large protein complex of the mitochondrial inner membrane that plays crucial roles in the maintenance of crista junctions, inner membrane architecture, and formation of contact sites to the outer membrane. Specifically binds to cardiolipin (in vitro) but not to the precursor lipid phosphatidylglycerol. Plays a crucial role in crista junction formation and mitochondrial function,. The protein is MICOS complex subunit MIC27 (APOOL) of Homo sapiens (Human).